We begin with the raw amino-acid sequence, 273 residues long: Thiazole synthase (273 aa).

Residue lysine 110 is the Schiff-base intermediate with DXP of the active site. 1-deoxy-D-xylulose 5-phosphate-binding positions include glycine 171, 198–199, and 220–221; these read AG and NS.

This sequence belongs to the ThiG family. As to quaternary structure, homotetramer. Forms heterodimers with either ThiH or ThiS.

The protein localises to the cytoplasm. It catalyses the reaction [ThiS sulfur-carrier protein]-C-terminal-Gly-aminoethanethioate + 2-iminoacetate + 1-deoxy-D-xylulose 5-phosphate = [ThiS sulfur-carrier protein]-C-terminal Gly-Gly + 2-[(2R,5Z)-2-carboxy-4-methylthiazol-5(2H)-ylidene]ethyl phosphate + 2 H2O + H(+). It participates in cofactor biosynthesis; thiamine diphosphate biosynthesis. In terms of biological role, catalyzes the rearrangement of 1-deoxy-D-xylulose 5-phosphate (DXP) to produce the thiazole phosphate moiety of thiamine. Sulfur is provided by the thiocarboxylate moiety of the carrier protein ThiS. In vitro, sulfur can be provided by H(2)S. This Hydrogenovibrio crunogenus (strain DSM 25203 / XCL-2) (Thiomicrospira crunogena) protein is Thiazole synthase.